A 258-amino-acid polypeptide reads, in one-letter code: UPF0758 protein Bcep1808_2579 (258 aa).

The MPN domain maps to 136–258; it reads PIDSPGAVED…TFSFARAGWL (123 aa). His207, His209, and Asp220 together coordinate Zn(2+). Residues 207-220 carry the JAMM motif motif; the sequence is HNHPSGAVQPSAED.

It belongs to the UPF0758 family.

The protein is UPF0758 protein Bcep1808_2579 of Burkholderia vietnamiensis (strain G4 / LMG 22486) (Burkholderia cepacia (strain R1808)).